We begin with the raw amino-acid sequence, 499 residues long: Long chain base biosynthesis protein 2b (499 aa).

The chain crosses the membrane as a helical span at residues 5–25; that stretch reads VPYVTAATTLFSFGLIFGFGH. K322 bears the N6-(pyridoxal phosphate)lysine mark.

The protein belongs to the class-II pyridoxal-phosphate-dependent aminotransferase family. Heterodimer with LCB1. Component of the serine palmitoyltransferase (SPT) complex, composed of LCB1 and LCB2. Pyridoxal 5'-phosphate is required as a cofactor.

The protein resides in the endoplasmic reticulum membrane. The enzyme catalyses L-serine + hexadecanoyl-CoA + H(+) = 3-oxosphinganine + CO2 + CoA. It participates in lipid metabolism; sphingolipid metabolism. In terms of biological role, serine palmitoyltransferase (SPT). The heterodimer formed with LCB1 constitutes the catalytic core. This chain is Long chain base biosynthesis protein 2b, found in Oryza sativa subsp. japonica (Rice).